The following is a 196-amino-acid chain: Recombination protein RecR (196 aa).

Residues 57–72 form a C4-type zinc finger; the sequence is CERCHTFTQADICATC. The 96-residue stretch at 80-175 folds into the Toprim domain; sequence SKLCVVETPA…RLTRLARGVP (96 aa).

The protein belongs to the RecR family.

Its function is as follows. May play a role in DNA repair. It seems to be involved in an RecBC-independent recombinational process of DNA repair. It may act with RecF and RecO. This Albidiferax ferrireducens (strain ATCC BAA-621 / DSM 15236 / T118) (Rhodoferax ferrireducens) protein is Recombination protein RecR.